A 503-amino-acid polypeptide reads, in one-letter code: Probable cytosol aminopeptidase (503 aa).

K272 and D277 together coordinate Mn(2+). The active site involves K284. Residues D295, D354, and E356 each contribute to the Mn(2+) site. R358 is an active-site residue.

It belongs to the peptidase M17 family. Mn(2+) serves as cofactor.

Its subcellular location is the cytoplasm. It carries out the reaction Release of an N-terminal amino acid, Xaa-|-Yaa-, in which Xaa is preferably Leu, but may be other amino acids including Pro although not Arg or Lys, and Yaa may be Pro. Amino acid amides and methyl esters are also readily hydrolyzed, but rates on arylamides are exceedingly low.. The catalysed reaction is Release of an N-terminal amino acid, preferentially leucine, but not glutamic or aspartic acids.. Presumably involved in the processing and regular turnover of intracellular proteins. Catalyzes the removal of unsubstituted N-terminal amino acids from various peptides. The polypeptide is Probable cytosol aminopeptidase (Chlorobium limicola (strain DSM 245 / NBRC 103803 / 6330)).